A 144-amino-acid polypeptide reads, in one-letter code: MPKNKGKGGKNRRRGKNENESEKRELVFKEDGQEYAQVIKMLGNGRLEALCFDGVKRLCHIRGKLRKKVWINTSDIILVGLRDYQDNKADVILKYNADEARSLKAYGELPEHAKINETDTFGPGDDDEVQFDDIGDDDEDIDDI.

Residues 1-15 (MPKNKGKGGKNRRRG) show a composition bias toward basic residues. Residues 1 to 26 (MPKNKGKGGKNRRRGKNENESEKREL) form a disordered region. Basic and acidic residues predominate over residues 16-26 (KNENESEKREL). One can recognise an S1-like domain in the interval 22-96 (EKRELVFKED…NKADVILKYN (75 aa)). Lysine 88 participates in a covalent cross-link: Glycyl lysine isopeptide (Lys-Gly) (interchain with G-Cter in ubiquitin). Residues 114–144 (KINETDTFGPGDDDEVQFDDIGDDDEDIDDI) form a disordered region. The span at 124 to 144 (GDDDEVQFDDIGDDDEDIDDI) shows a compositional bias: acidic residues.

The protein belongs to the eIF-1A family. In terms of assembly, component of the 43S pre-initiation complex (43S PIC), which is composed of the 40S ribosomal subunit, EIF1, eIF1A (EIF1AX), eIF3 complex, EIF5 and eIF2-GTP-initiator tRNA complex (eIF2 ternary complex). Interacts with EIF5; this interaction contributes to the maintenance of EIF1 within the open 43S PIC. Interacts through its C-terminal domain (CTD) with the CTD of EIF5B; from the location of the start codon by the 43S complex until the formation of the 80S complex. Ubiquitous.

It localises to the cytoplasm. In terms of biological role, component of the 43S pre-initiation complex (43S PIC), which binds to the mRNA cap-proximal region, scans mRNA 5'-untranslated region, and locates the initiation codon. This protein enhances formation of the cap-proximal complex. Together with EIF1, facilitates scanning, start codon recognition, promotion of the assembly of 48S complex at the initiation codon (43S PIC becomes 48S PIC after the start codon is reached), and dissociation of aberrant complexes. After start codon location, together with EIF5B orients the initiator methionine-tRNA in a conformation that allows 60S ribosomal subunit joining to form the 80S initiation complex. Is released after 80S initiation complex formation, just after GTP hydrolysis by EIF5B, and before release of EIF5B. Its globular part is located in the A site of the 40S ribosomal subunit. Its interaction with EIF5 during scanning contribute to the maintenance of EIF1 within the open 43S PIC. In contrast to yeast orthologs, does not bind EIF1. The polypeptide is Eukaryotic translation initiation factor 1A, Y-chromosomal (EIF1AY) (Pan troglodytes (Chimpanzee)).